Consider the following 213-residue polypeptide: Protein GrpE (213 aa).

The tract at residues 1-61 is disordered; that stretch reads MEQGEKQVME…AEKAPTAEEL (61 aa). The segment covering 13 to 35 has biased composition (acidic residues); the sequence is TYDEPEREQPIEEEAAPQPEEES.

This sequence belongs to the GrpE family. As to quaternary structure, homodimer.

It localises to the cytoplasm. Functionally, participates actively in the response to hyperosmotic and heat shock by preventing the aggregation of stress-denatured proteins, in association with DnaK and GrpE. It is the nucleotide exchange factor for DnaK and may function as a thermosensor. Unfolded proteins bind initially to DnaJ; upon interaction with the DnaJ-bound protein, DnaK hydrolyzes its bound ATP, resulting in the formation of a stable complex. GrpE releases ADP from DnaK; ATP binding to DnaK triggers the release of the substrate protein, thus completing the reaction cycle. Several rounds of ATP-dependent interactions between DnaJ, DnaK and GrpE are required for fully efficient folding. This Geobacillus kaustophilus (strain HTA426) protein is Protein GrpE.